Consider the following 362-residue polypeptide: Aminomethyltransferase (362 aa).

This sequence belongs to the GcvT family. In terms of assembly, the glycine cleavage system is composed of four proteins: P, T, L and H.

It catalyses the reaction N(6)-[(R)-S(8)-aminomethyldihydrolipoyl]-L-lysyl-[protein] + (6S)-5,6,7,8-tetrahydrofolate = N(6)-[(R)-dihydrolipoyl]-L-lysyl-[protein] + (6R)-5,10-methylene-5,6,7,8-tetrahydrofolate + NH4(+). In terms of biological role, the glycine cleavage system catalyzes the degradation of glycine. In Chloroherpeton thalassium (strain ATCC 35110 / GB-78), this protein is Aminomethyltransferase.